The primary structure comprises 197 residues: Imidazoleglycerol-phosphate dehydratase (197 aa).

Belongs to the imidazoleglycerol-phosphate dehydratase family.

Its subcellular location is the cytoplasm. The catalysed reaction is D-erythro-1-(imidazol-4-yl)glycerol 3-phosphate = 3-(imidazol-4-yl)-2-oxopropyl phosphate + H2O. Its pathway is amino-acid biosynthesis; L-histidine biosynthesis; L-histidine from 5-phospho-alpha-D-ribose 1-diphosphate: step 6/9. The chain is Imidazoleglycerol-phosphate dehydratase from Chromohalobacter salexigens (strain ATCC BAA-138 / DSM 3043 / CIP 106854 / NCIMB 13768 / 1H11).